A 347-amino-acid chain; its full sequence is Inosamine-phosphate amidinotransferase 1 (347 aa).

Active-site residues include D179 and H227. Catalysis depends on C332, which acts as the Amidino-cysteine intermediate.

The protein belongs to the amidinotransferase family. In terms of assembly, homodimer.

The enzyme catalyses 1-amino-1-deoxy-scyllo-inositol 4-phosphate + L-arginine = 1-guanidino-1-deoxy-scyllo-inositol 4-phosphate + L-ornithine. It functions in the pathway antibiotic biosynthesis; streptomycin biosynthesis. Its function is as follows. Catalyzes two non-consecutive transamidination reactions. It converts scyllo-inosamine 4-phosphate into N-amidino-scyllo-inosamine 4-phosphate and N1-amidinostreptamine 6-phosphate into streptidine 6-phosphate. The protein is Inosamine-phosphate amidinotransferase 1 (strB1) of Streptomyces griseus.